Here is a 478-residue protein sequence, read N- to C-terminus: Chromosomal replication initiator protein DnaA (478 aa).

Residues 1 to 71 form a domain I, interacts with DnaA modulators region; it reads MNLTHIWKTT…RNALTRVVGY (71 aa). The tract at residues 71–136 is domain II; sequence YPVQVQVLIA…LDLASAMRSG (66 aa). The tract at residues 137–353 is domain III, AAA+ region; it reads MLNPRYTFAS…GSLNRVAAYA (217 aa). ATP-binding residues include Gly181, Gly183, Lys184, and Thr185. The domain IV, binds dsDNA stretch occupies residues 354 to 478; sequence ELNRLPITID…RERIQMMRGL (125 aa).

This sequence belongs to the DnaA family. In terms of assembly, oligomerizes as a right-handed, spiral filament on DNA at oriC.

The protein resides in the cytoplasm. Functionally, plays an essential role in the initiation and regulation of chromosomal replication. ATP-DnaA binds to the origin of replication (oriC) to initiate formation of the DNA replication initiation complex once per cell cycle. Binds the DnaA box (a 9 base pair repeat at the origin) and separates the double-stranded (ds)DNA. Forms a right-handed helical filament on oriC DNA; dsDNA binds to the exterior of the filament while single-stranded (ss)DNA is stabiized in the filament's interior. The ATP-DnaA-oriC complex binds and stabilizes one strand of the AT-rich DNA unwinding element (DUE), permitting loading of DNA polymerase. After initiation quickly degrades to an ADP-DnaA complex that is not apt for DNA replication. Binds acidic phospholipids. This Chloroflexus aggregans (strain MD-66 / DSM 9485) protein is Chromosomal replication initiator protein DnaA.